The primary structure comprises 180 residues: MTTIVSVRRNGQVVIGGDGQVSLGNTVMKGNARKVHRLYNGKVLAGFAGGTADAFTLLERFEAKLQAHQGNLERAAVALAKEWRTDRALRRLEALLAVADAQRSFIITGNGDVVQPENDLIAIGSGGAFAQSAARALLENTELSAEEIVKKALTIAGDICVFTNSFHTIEVLEYPTVTPV.

Thr-2 is an active-site residue. Gly-157, Cys-160, and Thr-163 together coordinate Na(+).

This sequence belongs to the peptidase T1B family. HslV subfamily. As to quaternary structure, a double ring-shaped homohexamer of HslV is capped on each side by a ring-shaped HslU homohexamer. The assembly of the HslU/HslV complex is dependent on binding of ATP.

The protein localises to the cytoplasm. The catalysed reaction is ATP-dependent cleavage of peptide bonds with broad specificity.. With respect to regulation, allosterically activated by HslU binding. Functionally, protease subunit of a proteasome-like degradation complex believed to be a general protein degrading machinery. This chain is ATP-dependent protease subunit HslV, found in Tolumonas auensis (strain DSM 9187 / NBRC 110442 / TA 4).